The following is an 829-amino-acid chain: Protein kintoun (829 aa).

4 disordered regions span residues Val197–Glu255, Leu349–Ala377, Pro400–Asp465, and Arg478–Gly505. The span at Ala352–Pro371 shows a compositional bias: low complexity. The span at Pro416–Gly430 shows a compositional bias: basic and acidic residues. Ser450 is modified (phosphoserine). Residues Glu484–Ala497 are compositionally biased toward basic and acidic residues. Ser632 is modified (phosphoserine). Residues Asn667 to Thr698 form a disordered region. The segment covering Gln670 to Glu691 has biased composition (basic and acidic residues).

This sequence belongs to the PIH1 family. Kintoun subfamily. As to quaternary structure, interacts with CFAP300. Interacts with DNAI2 and HSPA1A. Interacts with DNAAF4. Interacts with DNAAF6/PIH1D3.

Its subcellular location is the cytoplasm. The protein localises to the dynein axonemal particle. In terms of biological role, required for cytoplasmic pre-assembly of axonemal dyneins, thereby playing a central role in motility in cilia and flagella. Involved in pre-assembly of dynein arm complexes in the cytoplasm before intraflagellar transport loads them for the ciliary compartment. The protein is Protein kintoun of Bos taurus (Bovine).